A 709-amino-acid chain; its full sequence is Rho guanine nucleotide exchange factor 16 (709 aa).

Ala-2 bears the N-acetylalanine mark. Residues Ser-6, Ser-41, and Ser-107 each carry the phosphoserine modification. The interval 22-70 (ELRLDAGGNPASGLPMVRGSPRVRDDAAFQPQVPAPPQPRPPGHEEPWP) is disordered. The segment at 114–146 (SREAARRDPKLLPAPSFSLDDMDVDKDPGGMLR) is disordered. 3 positions are modified to phosphoserine: Ser-174, Ser-191, and Ser-208. The interval 180-246 (LAEEPSQPHT…ESSSPEGTQK (67 aa)) is disordered. Over residues 191-207 (SPAKNKKTLGRKRGHKG) the composition is skewed to basic residues. Thr-226 is subject to Phosphothreonine. Phosphoserine occurs at positions 227, 230, and 240. The required for RHOG activation and mediates interaction with EPHA2 stretch occupies residues 275 to 481 (LDQLSTEERK…MERMEQMYTL (207 aa)). Positions 284-468 (KRQEAMFEIL…SKLVRQCNEG (185 aa)) constitute a DH domain. Positions 501-620 (WLLKRGELFL…WIVALTHSER (120 aa)) constitute a PH domain. One can recognise an SH3 domain in the interval 629-689 (GDLPQVEITK…PEDFARFITS (61 aa)). Positions 707–709 (TDV) match the PDZ-binding motif motif.

In terms of assembly, interacts with ELMO2, EPHA2, RAC1 and RHOG; mediates activation of RAC1 by EPHA2. Interacts with TAX1BP3 (via PDZ domain). May interact with CDC42; stimulated by HPV16 E6.

It is found in the cytoplasm. Functionally, guanyl-nucleotide exchange factor of the RHOG GTPase stimulating the exchange of RHOG-associated GDP for GTP. May play a role in chemotactic cell migration by mediating the activation of RAC1 by EPHA2. May also activate CDC42 and mediate activation of CDC42 by the viral protein HPV16 E6. The sequence is that of Rho guanine nucleotide exchange factor 16 (ARHGEF16) from Homo sapiens (Human).